A 334-amino-acid polypeptide reads, in one-letter code: MIPTPTRDAPNIPSFLAADVGGTHVRVSVVAAAPTCASPPQLFDVRTYRCADYPSLSTILNDFLGTRSAVRDCVIASAGFQRSDGTVITTNLPWPLSPHRLRADLNLAEVCLVNDFEALAYATEDMEPAQLLHLTGPAKAQDGPRLLLGPGTGLGAALWIPNNGRPIVLPTEAGQAALPSTTELEMQLVRHMLNNRTHVPIEHALSGPGILNVYRALCALQSVLPQHASPDAISHAAAAGTDMLSSQTLEVFCDFLGSIVGDLVMMYGAQGGVYLAGGILPQLREPLLRSHFVERFLNKGPMGEALQHVPVRLIEHGQLGIVGAARWYLNKKAT.

Residue 18-23 (ADVGGT) coordinates ATP.

The protein belongs to the bacterial glucokinase family.

The chain is Glucokinase-like protein PD_0680 from Xylella fastidiosa (strain Temecula1 / ATCC 700964).